Here is a 214-residue protein sequence, read N- to C-terminus: Superoxide dismutase [Mn/Fe] (214 aa).

Positions 31, 79, 165, and 169 each coordinate Fe(3+). Residues H31, H79, D165, and H169 each coordinate Mn(2+).

Belongs to the iron/manganese superoxide dismutase family. The cofactor is Mn(2+). Fe(3+) is required as a cofactor.

It carries out the reaction 2 superoxide + 2 H(+) = H2O2 + O2. Destroys superoxide anion radicals which are normally produced within the cells and which are toxic to biological systems. Catalyzes the dismutation of superoxide anion radicals into O2 and H2O2 by successive reduction and oxidation of the transition metal ion at the active site. The polypeptide is Superoxide dismutase [Mn/Fe] (sod) (Aeropyrum pernix (strain ATCC 700893 / DSM 11879 / JCM 9820 / NBRC 100138 / K1)).